The primary structure comprises 262 residues: Ribosome-recycling factor, mitochondrial (262 aa).

The N-terminal 55 residues, 1–55, are a transit peptide targeting the mitochondrion; the sequence is MALGIRCFRLLHPAFSSYLADLSRPVSEVPMKTVRGRQRDHIQYSAHPAVPVRQF.

This sequence belongs to the RRF family.

Its subcellular location is the mitochondrion. Functionally, responsible for the disassembly of ribosomes from messenger RNA at the termination of mitochondrial protein biosynthesis. Acts in collaboration with GFM2. Promotes mitochondrial ribosome recycling by dissolution of intersubunit contacts. This Rattus norvegicus (Rat) protein is Ribosome-recycling factor, mitochondrial (Mrrf).